A 58-amino-acid chain; its full sequence is U-scoloptoxin(14)-Sa1a (58 aa).

The N-terminal stretch at 1-18 is a signal peptide; sequence MNRILGMIFLFCLISCYA.

This sequence belongs to the scoloptoxin-14 family. Post-translationally, contains 4 disulfide bonds. Expressed by the venom gland.

It localises to the secreted. The chain is U-scoloptoxin(14)-Sa1a from Scolopendra alternans (Florida Keys giant centipede).